An 85-amino-acid chain; its full sequence is Large ribosomal subunit protein bL27 (85 aa).

The interval 1-21 (MAHKKAGGSSRNGRDSEAKRL) is disordered.

Belongs to the bacterial ribosomal protein bL27 family.

In Aeromonas hydrophila subsp. hydrophila (strain ATCC 7966 / DSM 30187 / BCRC 13018 / CCUG 14551 / JCM 1027 / KCTC 2358 / NCIMB 9240 / NCTC 8049), this protein is Large ribosomal subunit protein bL27.